The following is a 243-amino-acid chain: Carboxy-S-adenosyl-L-methionine synthase (243 aa).

Residues Y40, 65–67 (GCS), 90–91 (DN), 118–119 (DI), N133, and R200 each bind S-adenosyl-L-methionine.

Belongs to the class I-like SAM-binding methyltransferase superfamily. Cx-SAM synthase family. Homodimer.

The catalysed reaction is prephenate + S-adenosyl-L-methionine = carboxy-S-adenosyl-L-methionine + 3-phenylpyruvate + H2O. Its function is as follows. Catalyzes the conversion of S-adenosyl-L-methionine (SAM) to carboxy-S-adenosyl-L-methionine (Cx-SAM). This Shewanella sediminis (strain HAW-EB3) protein is Carboxy-S-adenosyl-L-methionine synthase.